The following is a 616-amino-acid chain: Homeodomain-interacting protein kinase 4 (616 aa).

The 337-residue stretch at 11 to 347 (YDIIEVLGKG…PSAALRHPFV (337 aa)) folds into the Protein kinase domain. Residues 17-25 (LGKGTFGEV) and K40 contribute to the ATP site. D136 serves as the catalytic Proton acceptor. Residues 487-616 (HKARKAPAGS…SFLQHVGGHH (130 aa)) form a disordered region. Residues 497–512 (KSDSNFSNLIRLSQAS) are compositionally biased toward polar residues. Position 512 is a phosphoserine (S512). The segment covering 542–560 (REGDGPSIKDRPMDAERSG) has biased composition (basic and acidic residues).

It belongs to the protein kinase superfamily. CMGC Ser/Thr protein kinase family. HIPK subfamily. In terms of processing, autophosphorylated.

The protein resides in the cytoplasm. It carries out the reaction L-seryl-[protein] + ATP = O-phospho-L-seryl-[protein] + ADP + H(+). The enzyme catalyses L-threonyl-[protein] + ATP = O-phospho-L-threonyl-[protein] + ADP + H(+). Its function is as follows. Protein kinase that phosphorylates TP53, and thus induces TP53 repression of BIRC5 promoter. May act as a corepressor of transcription factors (Potential). The protein is Homeodomain-interacting protein kinase 4 (Hipk4) of Rattus norvegicus (Rat).